The following is a 175-amino-acid chain: Inorganic pyrophosphatase (175 aa).

Substrate contacts are provided by lysine 30, arginine 44, and tyrosine 56. Mg(2+) is bound by residues aspartate 66, aspartate 71, and aspartate 103. Residue tyrosine 142 participates in substrate binding.

This sequence belongs to the PPase family. As to quaternary structure, homohexamer. Mg(2+) serves as cofactor.

The protein resides in the cytoplasm. The enzyme catalyses diphosphate + H2O = 2 phosphate + H(+). Its function is as follows. Catalyzes the hydrolysis of inorganic pyrophosphate (PPi) forming two phosphate ions. The protein is Inorganic pyrophosphatase of Ralstonia nicotianae (strain ATCC BAA-1114 / GMI1000) (Ralstonia solanacearum).